Reading from the N-terminus, the 354-residue chain is UDP-N-acetylglucosamine--N-acetylmuramyl-(pentapeptide) pyrophosphoryl-undecaprenol N-acetylglucosamine transferase (354 aa).

Residues 11 to 13, R164, S194, and Q289 contribute to the UDP-N-acetyl-alpha-D-glucosamine site; that span reads TAG.

The protein belongs to the glycosyltransferase 28 family. MurG subfamily.

The protein resides in the cell membrane. It carries out the reaction di-trans,octa-cis-undecaprenyl diphospho-N-acetyl-alpha-D-muramoyl-L-alanyl-D-glutamyl-meso-2,6-diaminopimeloyl-D-alanyl-D-alanine + UDP-N-acetyl-alpha-D-glucosamine = di-trans,octa-cis-undecaprenyl diphospho-[N-acetyl-alpha-D-glucosaminyl-(1-&gt;4)]-N-acetyl-alpha-D-muramoyl-L-alanyl-D-glutamyl-meso-2,6-diaminopimeloyl-D-alanyl-D-alanine + UDP + H(+). The protein operates within cell wall biogenesis; peptidoglycan biosynthesis. Functionally, cell wall formation. Catalyzes the transfer of a GlcNAc subunit on undecaprenyl-pyrophosphoryl-MurNAc-pentapeptide (lipid intermediate I) to form undecaprenyl-pyrophosphoryl-MurNAc-(pentapeptide)GlcNAc (lipid intermediate II). The sequence is that of UDP-N-acetylglucosamine--N-acetylmuramyl-(pentapeptide) pyrophosphoryl-undecaprenol N-acetylglucosamine transferase from Clostridium botulinum (strain Loch Maree / Type A3).